Consider the following 228-residue polypeptide: Ornithine decarboxylase antizyme 1 (228 aa).

Residues 17–55 (REKEGDKPSATIHASRTMPLLSLHSRGGSSSESSRVSLH) are disordered. A compositionally biased stretch (low complexity) spans 36–55 (LLSLHSRGGSSSESSRVSLH).

It belongs to the ODC antizyme family. In terms of assembly, interacts with ODC1 and thereby sterically blocks ODC homodimerization. Forms a ternary complex with PSMB4 and OAZ1 before PSMB4 is incorporated into the 20S proteasome. Interacts with AZIN2; this interaction disrupts the interaction between the antizyme and ODC1. Interacts with FAM171A1.

In terms of biological role, ornithine decarboxylase (ODC) antizyme protein that negatively regulates ODC activity and intracellular polyamine biosynthesis and uptake in response to increased intracellular polyamine levels. Binds to ODC monomers, inhibiting the assembly of the functional ODC homodimer, and targets the monomers for ubiquitin-independent proteolytic destruction by the 26S proteasome. Triggers ODC degradation by inducing the exposure of a cryptic proteasome-interacting surface of ODC. Stabilizes AZIN2 by interfering with its ubiquitination. Also inhibits cellular uptake of polyamines by inactivating the polyamine uptake transporter. SMAD1/OAZ1/PSMB4 complex mediates the degradation of the CREBBP/EP300 repressor SNIP1. Involved in the translocation of AZIN2 from ER-Golgi intermediate compartment (ERGIC) to the cytosol. The chain is Ornithine decarboxylase antizyme 1 (OAZ1) from Homo sapiens (Human).